Consider the following 106-residue polypeptide: Small ribosomal subunit protein bS16 (106 aa).

The protein belongs to the bacterial ribosomal protein bS16 family.

The sequence is that of Small ribosomal subunit protein bS16 from Protochlamydia amoebophila (strain UWE25).